Here is a 341-residue protein sequence, read N- to C-terminus: MQSITVALDAMGGDFGPRVTVPAAVQALSHFPELKVILIGDQSLITSQLSQLGTSTSSRLSILHSEKVISNSEKPSLALRNSQNSSMRMAIDLVSDNEADACVSGGNTGALMALSRFVLKLLPGIERPALVSALPTISGKRTWMLDLGANVSCDADSLFQFAVMGSALAEEHLGRPPRVAVLNIGAEEIKGNDLVKRCAEMLSQTDAINFVGYIEGNQILHDVADVIVCDGFVGNVCLKASEGTAQLFIEKLKTSMMASTIKGWIARKLFSRLFNELKTLNPDQYNGASLLGLRGIVIKSHGSADVSAIVNALGEAVHEVKRQVPSRISDRLEAVLLERHY.

Belongs to the PlsX family. In terms of assembly, homodimer. Probably interacts with PlsY.

It localises to the cytoplasm. It carries out the reaction a fatty acyl-[ACP] + phosphate = an acyl phosphate + holo-[ACP]. It participates in lipid metabolism; phospholipid metabolism. In terms of biological role, catalyzes the reversible formation of acyl-phosphate (acyl-PO(4)) from acyl-[acyl-carrier-protein] (acyl-ACP). This enzyme utilizes acyl-ACP as fatty acyl donor, but not acyl-CoA. The protein is Phosphate acyltransferase of Vibrio campbellii (strain ATCC BAA-1116).